Here is a 363-residue protein sequence, read N- to C-terminus: Glutamate 5-kinase (363 aa).

Lys-6 contributes to the ATP binding site. The substrate site is built by Ser-46, Asp-133, and Asn-145. ATP is bound by residues 165-166 (TD) and 207-213 (TGGMHTK). Residues 271 to 349 (HGRLLLDGGA…REIEALLGYT (79 aa)) form the PUA domain.

Belongs to the glutamate 5-kinase family.

It is found in the cytoplasm. It carries out the reaction L-glutamate + ATP = L-glutamyl 5-phosphate + ADP. It participates in amino-acid biosynthesis; L-proline biosynthesis; L-glutamate 5-semialdehyde from L-glutamate: step 1/2. Functionally, catalyzes the transfer of a phosphate group to glutamate to form L-glutamate 5-phosphate. The polypeptide is Glutamate 5-kinase (Deinococcus radiodurans (strain ATCC 13939 / DSM 20539 / JCM 16871 / CCUG 27074 / LMG 4051 / NBRC 15346 / NCIMB 9279 / VKM B-1422 / R1)).